The following is a 463-amino-acid chain: Cytidylate cyclase (463 aa).

The 110-residue stretch at 122-231 folds into the Guanylate cyclase domain; that stretch reads VTMFMDIIGS…IGIRIGIDLG (110 aa). Residue phenylalanine 125 coordinates a ribonucleoside 5'-triphosphate. Positions 127, 128, and 171 each coordinate Mn(2+). The interval 334–454 is AGS-C domain; it reads KPSRIKVVIS…VISNDTVIER (121 aa).

Belongs to the adenylyl cyclase class-4/guanylyl cyclase family. Pyrimidine cyclase subfamily. In terms of assembly, homodimer. It depends on Mn(2+) as a cofactor.

It is found in the cytoplasm. The catalysed reaction is CTP = 3',5'-cyclic CMP + diphosphate. Its function is as follows. Pycsar (pyrimidine cyclase system for antiphage resistance) provides immunity against bacteriophage. The pyrimidine cyclase (PycC) synthesizes cyclic nucleotides in response to infection; these serve as specific second messenger signals. The signal activates the adjacent effector, leading to bacterial cell death and abortive phage infection. A clade E Pycsar system. In terms of biological role, the pyrimidine cyclase gene of a two-gene Pycsar system, generates cyclic CMP (cCMP) from CTP in response to bacteriophage infection. Has little to no activity on ATP, GTP or UTP. Expression of this and adjacent effector Ec303145PycTM (AC P0DV27) confers resistance to bacteriophage P1, T5, lambda-vir and phi27. In Escherichia coli, this protein is Cytidylate cyclase.